A 210-amino-acid chain; its full sequence is uncharacterized protein (210 aa).

Helical transmembrane passes span 9 to 29, 35 to 55, 64 to 84, 91 to 111, 149 to 169, and 190 to 210; these read WVVT…IIAK, LIVN…MAWP, GPAV…VVAV, GLYG…AAMN, IWFS…AVFW, and IGQA…LFPV.

It localises to the cell membrane. This is an uncharacterized protein from Mycobacterium bovis (strain ATCC BAA-935 / AF2122/97).